The following is a 591-amino-acid chain: Calnexin (591 aa).

Positions 1–20 (MEGKWLLCLLLVLGTAAVEA) are cleaved as a signal peptide. The Lumenal portion of the chain corresponds to 21-482 (HDGHDDDAID…QMLEAAEERP (462 aa)). S75 and D118 together coordinate Ca(2+). The residue at position 138 (K138) is an N6-acetyllysine. The cysteines at positions 161 and 195 are disulfide-linked. Positions 165, 167, 186, and 193 each coordinate an alpha-D-glucoside. The segment at 261–347 (GNLLNDMTPP…EKPEDWDEDM (87 aa)) is disordered. A compositionally biased stretch (basic and acidic residues) spans 275–320 (REIEDPEDRKPEDWDERPKIADPDAVKPDDWDEDAPSKIPDEEATK). Residues 277–410 (IEDPEDRKPE…RKIPNPDFFE (134 aa)) form a p domain (Extended arm) region. 5 consecutive repeat copies span residues 279–291 (DPEDRKPEDWDER), 296–308 (DPDAVKPDDWDED), 315–327 (DEEATKPEGWLDD), 334–346 (DPDAEKPEDWDED), and 349–359 (GEWEAPQIANP). 2 4 X approximate repeats regions span residues 279–346 (DPED…WDED) and 349–406 (GEWE…IPNP). Positions 324–347 (WLDDEPEYIPDPDAEKPEDWDEDM) are enriched in acidic residues. Residues 327–360 (DEPEYIPDPDAEKPEDWDEDMDGEWEAPQIANPK) are interaction with PPIB. C361 and C367 are joined by a disulfide. Repeat copies occupy residues 368-378 (GVWQRPMIDNP), 382-392 (GKWKPPMIDNP), and 396-406 (GIWKPRKIPNP). Position 426 (E426) interacts with an alpha-D-glucoside. Ca(2+) is bound at residue D437. A helical membrane pass occupies residues 483–503 (WLWVVYILTVALPVFLVILFC). S-palmitoyl cysteine attachment occurs at residues C503 and C504. At 504-591 (CSGKKQSNAM…SPRNRKPRRE (88 aa)) the chain is on the cytoplasmic side. Residues 504 to 591 (CSGKKQSNAM…SPRNRKPRRE (88 aa)) form a sufficient to mediate interaction with SGIP1 region. Positions 514-539 (EYKKTDAPQPDVKDEEGKEEEKNKRD) are enriched in basic and acidic residues. A disordered region spans residues 514–591 (EYKKTDAPQP…SPRNRKPRRE (78 aa)). Position 553 is a phosphoserine (S553). Residues 555 to 568 (AEEDGVTGSQDEED) show a composition bias toward acidic residues. T561 carries the phosphothreonine modification. S563 bears the Phosphoserine; by MAPK3 mark. S582 is subject to Phosphoserine.

It belongs to the calreticulin family. Interacts with MAPK3/ERK1. Interacts with KCNH2. Associates with ribosomes. The palmitoylated form interacts with the ribosome-translocon complex component SSR1, promoting efficient folding of glycoproteins. Interacts with SERPINA2P/SERPINA2 and with the S and Z variants of SERPINA1. Interacts with SGIP1; involved in negative regulation of endocytosis. Interacts with PPIB. Interacts with SMIM22. Interacts with TMX2. Interacts with TMEM35A/NACHO. Interacts with CHRNA7. Interacts with reticulophagy regulators RETREG2 and RETREG3. Interacts with DNM1L; may form part of a larger protein complex at the ER-mitochondrial interface during mitochondrial fission. Interacts with ADAM7. Phosphorylated at Ser-563 by MAPK3/ERK1. Phosphorylation by MAPK3/ERK1 increases its association with ribosomes. Post-translationally, palmitoylation by DHHC6 leads to the preferential localization to the perinuclear rough ER. It mediates the association of calnexin with the ribosome-translocon complex (RTC) which is required for efficient folding of glycosylated proteins. In terms of processing, ubiquitinated, leading to proteasomal degradation. Probably ubiquitinated by ZNRF4. Expressed in sperm (at protein level).

The protein localises to the endoplasmic reticulum membrane. It is found in the mitochondrion membrane. Its subcellular location is the melanosome membrane. Functionally, calcium-binding protein that interacts with newly synthesized monoglucosylated glycoproteins in the endoplasmic reticulum. It may act in assisting protein assembly and/or in the retention within the ER of unassembled protein subunits. It seems to play a major role in the quality control apparatus of the ER by the retention of incorrectly folded proteins. Associated with partial T-cell antigen receptor complexes that escape the ER of immature thymocytes, it may function as a signaling complex regulating thymocyte maturation. Additionally it may play a role in receptor-mediated endocytosis at the synapse. This chain is Calnexin (Canx), found in Mus musculus (Mouse).